The primary structure comprises 412 residues: Multifunctional CCA protein (412 aa).

ATP is bound by residues Gly8 and Arg11. 2 residues coordinate CTP: Gly8 and Arg11. Asp21 and Asp23 together coordinate Mg(2+). ATP is bound by residues Arg91, Arg137, and Arg140. Positions 91, 137, and 140 each coordinate CTP. The region spanning 226–327 (TGEHVLMVVE…VKVLERCDAL (102 aa)) is the HD domain.

This sequence belongs to the tRNA nucleotidyltransferase/poly(A) polymerase family. Bacterial CCA-adding enzyme type 1 subfamily. In terms of assembly, monomer. Can also form homodimers and oligomers. Mg(2+) serves as cofactor. Requires Ni(2+) as cofactor.

The catalysed reaction is a tRNA precursor + 2 CTP + ATP = a tRNA with a 3' CCA end + 3 diphosphate. It carries out the reaction a tRNA with a 3' CCA end + 2 CTP + ATP = a tRNA with a 3' CCACCA end + 3 diphosphate. Catalyzes the addition and repair of the essential 3'-terminal CCA sequence in tRNAs without using a nucleic acid template. Adds these three nucleotides in the order of C, C, and A to the tRNA nucleotide-73, using CTP and ATP as substrates and producing inorganic pyrophosphate. tRNA 3'-terminal CCA addition is required both for tRNA processing and repair. Also involved in tRNA surveillance by mediating tandem CCA addition to generate a CCACCA at the 3' terminus of unstable tRNAs. While stable tRNAs receive only 3'-terminal CCA, unstable tRNAs are marked with CCACCA and rapidly degraded. The chain is Multifunctional CCA protein from Azoarcus sp. (strain BH72).